Consider the following 1132-residue polypeptide: Phosphatidylinositide phosphatase SAC2 (1132 aa).

In terms of domain architecture, SAC spans 167–518 (LKMFMDSESF…GDSISRQYAG (352 aa)). Residues 593–760 (RSHQELISQL…KSSKPHEDII (168 aa)) enclose the hSac2 domain. Phosphoserine is present on residues Ser827 and Ser830. Positions 846-875 (ESDGDMSSDNDSYHSDEFLTNSKSDEDRQL) are disordered. Residues 856–874 (DSYHSDEFLTNSKSDEDRQ) show a composition bias toward basic and acidic residues. Phosphoserine is present on residues Ser878, Ser881, Ser907, and Ser910. Disordered stretches follow at residues 923-942 (VAHGSGLGKGQESPLKKSPS) and 974-1017 (LSET…LDVS). Residue Ser1103 is modified to Phosphoserine.

In terms of assembly, homodimer. Interacts with OCRL and RAB5A. Interacts with INPP5B and INPP4A. Interacts with STAT3; the interaction is independent of STAT3 'Tyr-705' phosphorylation status. Ubiquitous. Highly expressed in brain.

The protein localises to the membrane. It is found in the clathrin-coated pit. Its subcellular location is the early endosome. It localises to the recycling endosome. The enzyme catalyses a myo-inositol phosphate + H2O = myo-inositol + phosphate. Functionally, inositol 4-phosphatase which mainly acts on phosphatidylinositol 4-phosphate. May be functionally linked to OCRL, which converts phosphatidylinositol 4,5-bisphosphate to phosphatidylinositol, for a sequential dephosphorylation of phosphatidylinositol 4,5-bisphosphate at the 5 and 4 position of inositol, thus playing an important role in the endocytic recycling. Regulator of TF:TFRC and integrins recycling pathway, is also involved in cell migration mechanisms. Modulates AKT/GSK3B pathway by decreasing AKT and GSK3B phosphorylation. Negatively regulates STAT3 signaling pathway through inhibition of STAT3 phosphorylation and translocation to the nucleus. Functionally important modulator of cardiac myocyte size and of the cardiac response to stress. May play a role as negative regulator of axon regeneration after central nervous system injuries. The polypeptide is Phosphatidylinositide phosphatase SAC2 (Homo sapiens (Human)).